Here is a 150-residue protein sequence, read N- to C-terminus: Phosphopantetheine adenylyltransferase (150 aa).

Thr-9 lines the substrate pocket. Residues 9 to 10 (TF) and His-17 each bind ATP. Residues Lys-41, Thr-73, and Arg-87 each contribute to the substrate site. ATP contacts are provided by residues 88 to 90 (GIR), Glu-98, and 122 to 128 (LTCVSST).

The protein belongs to the bacterial CoaD family. In terms of assembly, homohexamer. The cofactor is Mg(2+).

It localises to the cytoplasm. It catalyses the reaction (R)-4'-phosphopantetheine + ATP + H(+) = 3'-dephospho-CoA + diphosphate. It functions in the pathway cofactor biosynthesis; coenzyme A biosynthesis; CoA from (R)-pantothenate: step 4/5. Functionally, reversibly transfers an adenylyl group from ATP to 4'-phosphopantetheine, yielding dephospho-CoA (dPCoA) and pyrophosphate. The protein is Phosphopantetheine adenylyltransferase of Bacteroides fragilis (strain ATCC 25285 / DSM 2151 / CCUG 4856 / JCM 11019 / LMG 10263 / NCTC 9343 / Onslow / VPI 2553 / EN-2).